Reading from the N-terminus, the 297-residue chain is uncharacterized protein (297 aa).

The tract at residues 1–29 is disordered; it reads MAESKAKNMFQKLSLTPKRNHEHDAGRNI. The segment covering 19–29 has biased composition (basic and acidic residues); it reads RNHEHDAGRNI.

This is an uncharacterized protein from Caenorhabditis elegans.